The sequence spans 143 residues: Ribosome maturation factor RimP (143 aa).

Belongs to the RimP family.

It localises to the cytoplasm. Required for maturation of 30S ribosomal subunits. The polypeptide is Ribosome maturation factor RimP (Neisseria gonorrhoeae (strain ATCC 700825 / FA 1090)).